Reading from the N-terminus, the 247-residue chain is uncharacterized protein (247 aa).

This is an uncharacterized protein from Acidianus bottle-shaped virus (isolate Italy/Pozzuoli) (ABV).